We begin with the raw amino-acid sequence, 623 residues long: Pentatricopeptide repeat-containing protein At5g15340, mitochondrial (623 aa).

The N-terminal 16 residues, 1–16 (MKCLSYQKVRLLLRHC), are a transit peptide targeting the mitochondrion. PPR repeat units follow at residues 42-72 (RSYL…IPLS), 75-109 (DNVD…RVEI), 110-144 (DDVS…GVLT), 145-179 (SVKV…SVVS), 180-206 (WTVV…MPER), 207-237 (NAVA…MVFR), 243-277 (NFVT…EMMM), 285-319 (DVMV…NVVT), 320-346 (WNAL…MIRE), 350-384 (DDLT…GLEP), and 385-419 (KVDH…PNEV). Residues 420-495 (VLGSLLGSCS…IPGLSSIYVN (76 aa)) form a type E motif region. Positions 496 to 526 (DSVHRFSSGDRSHPRTKEIYLKLNEVIERIR) are type E(+) motif. The tract at residues 527 to 623 (SAGYVPDVSG…GGSCSCSDYW (97 aa)) is type DYW motif.

Belongs to the PPR family. PCMP-H subfamily.

Its subcellular location is the mitochondrion. The polypeptide is Pentatricopeptide repeat-containing protein At5g15340, mitochondrial (PCMP-H91) (Arabidopsis thaliana (Mouse-ear cress)).